The primary structure comprises 147 residues: Cytochrome c-type biogenesis protein CcmE (147 aa).

The Cytoplasmic portion of the chain corresponds to 1 to 9 (MKSLKKKRR). A helical; Signal-anchor for type II membrane protein membrane pass occupies residues 10-30 (IQILVAAAVALVLAVGLIGYG). The Periplasmic portion of the chain corresponds to 31–147 (FRDGINLYRS…EQGVYQEPNS (117 aa)). Residues H123 and Y127 each contribute to the heme site.

This sequence belongs to the CcmE/CycJ family.

It localises to the cell inner membrane. Its function is as follows. Heme chaperone required for the biogenesis of c-type cytochromes. Transiently binds heme delivered by CcmC and transfers the heme to apo-cytochromes in a process facilitated by CcmF and CcmH. This Paracoccus denitrificans (strain Pd 1222) protein is Cytochrome c-type biogenesis protein CcmE.